The primary structure comprises 211 residues: Urease accessory protein UreG (211 aa).

11-18 is a binding site for GTP; that stretch reads GPVGAGKT.

This sequence belongs to the SIMIBI class G3E GTPase family. UreG subfamily. Homodimer. UreD, UreF and UreG form a complex that acts as a GTP-hydrolysis-dependent molecular chaperone, activating the urease apoprotein by helping to assemble the nickel containing metallocenter of UreC. The UreE protein probably delivers the nickel.

The protein localises to the cytoplasm. Its function is as follows. Facilitates the functional incorporation of the urease nickel metallocenter. This process requires GTP hydrolysis, probably effectuated by UreG. The sequence is that of Urease accessory protein UreG from Actinobacillus pleuropneumoniae serotype 5b (strain L20).